Consider the following 242-residue polypeptide: Phosphoribosylaminoimidazole-succinocarboxamide synthase (242 aa).

The protein belongs to the SAICAR synthetase family.

It carries out the reaction 5-amino-1-(5-phospho-D-ribosyl)imidazole-4-carboxylate + L-aspartate + ATP = (2S)-2-[5-amino-1-(5-phospho-beta-D-ribosyl)imidazole-4-carboxamido]succinate + ADP + phosphate + 2 H(+). It participates in purine metabolism; IMP biosynthesis via de novo pathway; 5-amino-1-(5-phospho-D-ribosyl)imidazole-4-carboxamide from 5-amino-1-(5-phospho-D-ribosyl)imidazole-4-carboxylate: step 1/2. In Cyanothece sp. (strain PCC 7425 / ATCC 29141), this protein is Phosphoribosylaminoimidazole-succinocarboxamide synthase.